We begin with the raw amino-acid sequence, 359 residues long: 3-dehydroquinate synthase (359 aa).

NAD(+) is bound by residues 69-74 (DAETGK), 103-107 (GAATD), 127-128 (TT), Lys140, and Lys149. Zn(2+) contacts are provided by Glu182, His244, and His260.

It belongs to the sugar phosphate cyclases superfamily. Dehydroquinate synthase family. The cofactor is Co(2+). Zn(2+) is required as a cofactor. It depends on NAD(+) as a cofactor.

The protein resides in the cytoplasm. The catalysed reaction is 7-phospho-2-dehydro-3-deoxy-D-arabino-heptonate = 3-dehydroquinate + phosphate. It functions in the pathway metabolic intermediate biosynthesis; chorismate biosynthesis; chorismate from D-erythrose 4-phosphate and phosphoenolpyruvate: step 2/7. In terms of biological role, catalyzes the conversion of 3-deoxy-D-arabino-heptulosonate 7-phosphate (DAHP) to dehydroquinate (DHQ). This is 3-dehydroquinate synthase from Corynebacterium diphtheriae (strain ATCC 700971 / NCTC 13129 / Biotype gravis).